The sequence spans 514 residues: MAKPIMIQGTMSNAGKSLLTAGLCRIFTQDGYRVAPFKSQNMALNSYITTDGSEMGRAQVVQAEAAGKAPDVRMNPILLKPTSEKGSQVILGGKPIGNMTTTEYYAHKHNLLPHIKRAYESLSQENDIIVIEGAGSPAEINLKRDDFVNMGLAKMLKAPVLIAGDIDRGGVFASLYGTVMLFDEDERKHVKGTIINKFRGDVEILKPGLDMLCDLIHVPVVGVVPYLHVDIDDEDSLSERFSKKGPLGLIDIAVIKLPRISNFTDFNALEHIECASVRYVSGTNELGNPDLIIIPGSKNTMGDLKWMRENGLEVCIKKHAAKNKPVFGICGGYQMLCENLGDPYGVEHGGEMKGMGLLKSTTVFEKEKTRTRVMGTFSKVGGIFNGLSGKTFEGYEIHMGYTASEEGNEGDSSLSNLAEISGNEKPDGMQKGNVYGTYVHGVFDNDEILSEIAAALMKEKGLEYEKHTFFNLKEYKEKQYNLLADALRECLDMEYIYKVIEEGIENGNNETNGY.

Positions 249-448 (LIDIAVIKLP…VHGVFDNDEI (200 aa)) constitute a GATase cobBQ-type domain. The Nucleophile role is filled by Cys330. Residue His440 is part of the active site.

Belongs to the CobB/CobQ family. CobQ subfamily.

The protein operates within cofactor biosynthesis; adenosylcobalamin biosynthesis. Catalyzes amidations at positions B, D, E, and G on adenosylcobyrinic A,C-diamide. NH(2) groups are provided by glutamine, and one molecule of ATP is hydrogenolyzed for each amidation. This Ruminiclostridium cellulolyticum (strain ATCC 35319 / DSM 5812 / JCM 6584 / H10) (Clostridium cellulolyticum) protein is Cobyric acid synthase.